We begin with the raw amino-acid sequence, 328 residues long: Phenylalanine--tRNA ligase alpha subunit (328 aa).

Glu-253 is a binding site for Mg(2+).

The protein belongs to the class-II aminoacyl-tRNA synthetase family. Phe-tRNA synthetase alpha subunit type 1 subfamily. In terms of assembly, tetramer of two alpha and two beta subunits. Mg(2+) serves as cofactor.

The protein localises to the cytoplasm. It catalyses the reaction tRNA(Phe) + L-phenylalanine + ATP = L-phenylalanyl-tRNA(Phe) + AMP + diphosphate + H(+). This Actinobacillus pleuropneumoniae serotype 5b (strain L20) protein is Phenylalanine--tRNA ligase alpha subunit.